The chain runs to 256 residues: Ribosomal RNA small subunit methyltransferase J (256 aa).

Residues 104–105, 120–121, 156–157, and aspartate 174 contribute to the S-adenosyl-L-methionine site; these read RD, ER, and SS.

The protein belongs to the methyltransferase superfamily. RsmJ family.

The protein resides in the cytoplasm. The catalysed reaction is guanosine(1516) in 16S rRNA + S-adenosyl-L-methionine = N(2)-methylguanosine(1516) in 16S rRNA + S-adenosyl-L-homocysteine + H(+). Functionally, specifically methylates the guanosine in position 1516 of 16S rRNA. This is Ribosomal RNA small subunit methyltransferase J from Yersinia pseudotuberculosis serotype O:3 (strain YPIII).